The following is a 282-amino-acid chain: MTVIDGKALGVKLQAALAEKTARLKEEKGLVPGLVVILVGENPASQVYVRNKERSALAAGFKSEVVRVPDTISESDLLDLIERYNQDDEWHGILVQLPLPAHISEEKVLLAIDPDKDVDGFHPTNMGKFWSGHPVMIPSTPAGIMEMFKEYQIELEGKSALVIGRSNIVGKPMAQLLLDADATVTIAHSRTKNLPDLARQADILVVAIGRGHFVTKEFVKLGAVVIDVGMNRDENGKLIGDVKYDEVSEVASYITPVPGGVGPMTITMLMEQTYEACVRSAK.

NADP(+)-binding positions include 164–166 (GRS) and Ser189.

Belongs to the tetrahydrofolate dehydrogenase/cyclohydrolase family. Homodimer.

The catalysed reaction is (6R)-5,10-methylene-5,6,7,8-tetrahydrofolate + NADP(+) = (6R)-5,10-methenyltetrahydrofolate + NADPH. It catalyses the reaction (6R)-5,10-methenyltetrahydrofolate + H2O = (6R)-10-formyltetrahydrofolate + H(+). Its pathway is one-carbon metabolism; tetrahydrofolate interconversion. Its function is as follows. Catalyzes the oxidation of 5,10-methylenetetrahydrofolate to 5,10-methenyltetrahydrofolate and then the hydrolysis of 5,10-methenyltetrahydrofolate to 10-formyltetrahydrofolate. The chain is Bifunctional protein FolD from Streptococcus suis (strain 05ZYH33).